We begin with the raw amino-acid sequence, 131 residues long: Peptide methionine sulfoxide reductase MsrB (131 aa).

Positions L8 to R130 constitute a MsrB domain. Positions 47, 50, 96, and 99 each coordinate Zn(2+). Catalysis depends on C119, which acts as the Nucleophile.

The protein belongs to the MsrB Met sulfoxide reductase family. Requires Zn(2+) as cofactor.

The enzyme catalyses L-methionyl-[protein] + [thioredoxin]-disulfide + H2O = L-methionyl-(R)-S-oxide-[protein] + [thioredoxin]-dithiol. This Pseudomonas putida (strain GB-1) protein is Peptide methionine sulfoxide reductase MsrB.